Consider the following 175-residue polypeptide: Adenine phosphoribosyltransferase (175 aa).

This sequence belongs to the purine/pyrimidine phosphoribosyltransferase family. In terms of assembly, homodimer.

It is found in the cytoplasm. It catalyses the reaction AMP + diphosphate = 5-phospho-alpha-D-ribose 1-diphosphate + adenine. Its pathway is purine metabolism; AMP biosynthesis via salvage pathway; AMP from adenine: step 1/1. In terms of biological role, catalyzes a salvage reaction resulting in the formation of AMP, that is energically less costly than de novo synthesis. This is Adenine phosphoribosyltransferase from Francisella tularensis subsp. holarctica (strain FTNF002-00 / FTA).